The primary structure comprises 304 residues: GTPase Era (304 aa).

The Era-type G domain occupies 7–178 (KCGVVAVLGA…KNALAALMPE (172 aa)). A G1 region spans residues 15–22 (GAPNAGKS). 15 to 22 (GAPNAGKS) contributes to the GTP binding site. The segment at 41-45 (QTTRA) is G2. The interval 66–69 (DTPG) is G3. Residues 66 to 70 (DTPGI) and 128 to 131 (NKVD) contribute to the GTP site. The segment at 128–131 (NKVD) is G4. The interval 157 to 159 (VSA) is G5. Residues 209-286 (LHEELPYDSA…HLFLHVKVDE (78 aa)) form the KH type-2 domain.

It belongs to the TRAFAC class TrmE-Era-EngA-EngB-Septin-like GTPase superfamily. Era GTPase family. Monomer.

It is found in the cytoplasm. Its subcellular location is the cell inner membrane. An essential GTPase that binds both GDP and GTP, with rapid nucleotide exchange. Plays a role in 16S rRNA processing and 30S ribosomal subunit biogenesis and possibly also in cell cycle regulation and energy metabolism. In Erythrobacter litoralis (strain HTCC2594), this protein is GTPase Era.